Here is a 504-residue protein sequence, read N- to C-terminus: Pup--protein ligase (504 aa).

Glu-30 provides a ligand contact to Mg(2+). An ATP-binding site is contributed by Arg-74. Residue Tyr-76 coordinates Mg(2+). Asp-78 (proton acceptor) is an active-site residue. Glu-84 is a Mg(2+) binding site. 2 residues coordinate ATP: Thr-87 and Trp-459.

The protein belongs to the Pup ligase/Pup deamidase family. Pup-conjugating enzyme subfamily.

The enzyme catalyses ATP + [prokaryotic ubiquitin-like protein]-L-glutamate + [protein]-L-lysine = ADP + phosphate + N(6)-([prokaryotic ubiquitin-like protein]-gamma-L-glutamyl)-[protein]-L-lysine.. It participates in protein degradation; proteasomal Pup-dependent pathway. Its pathway is protein modification; protein pupylation. Its function is as follows. Catalyzes the covalent attachment of the prokaryotic ubiquitin-like protein modifier Pup to the proteasomal substrate proteins, thereby targeting them for proteasomal degradation. This tagging system is termed pupylation. The ligation reaction involves the side-chain carboxylate of the C-terminal glutamate of Pup and the side-chain amino group of a substrate lysine. This is Pup--protein ligase from Corynebacterium urealyticum (strain ATCC 43042 / DSM 7109).